Here is a 427-residue protein sequence, read N- to C-terminus: Ribitol transporter (427 aa).

At methionine 1 to glutamine 7 the chain is on the cytoplasmic side. The helical transmembrane segment at tryptophan 8–glycine 28 threads the bilayer. Residues aspartate 29–serine 51 are Extracellular-facing. The chain crosses the membrane as a helical span at residues phenylalanine 52 to alanine 72. Residues glutamate 73 to lysine 79 are Cytoplasmic-facing. The chain crosses the membrane as a helical span at residues alanine 80–leucine 100. Topologically, residues glycine 101–leucine 107 are extracellular. The chain crosses the membrane as a helical span at residues isoleucine 108–valine 128. Residues alanine 129–serine 141 lie on the Cytoplasmic side of the membrane. The helical transmembrane segment at alanine 142–proline 162 threads the bilayer. The Extracellular portion of the chain corresponds to serine 163–glutamate 171. A helical membrane pass occupies residues methionine 172 to serine 192. The Cytoplasmic portion of the chain corresponds to methionine 193–threonine 238. Residues leucine 239–threonine 259 traverse the membrane as a helical segment. Topologically, residues threonine 260–tryptophan 263 are extracellular. The chain crosses the membrane as a helical span at residues leucine 264 to valine 284. Residues alanine 285–arginine 295 are Cytoplasmic-facing. The chain crosses the membrane as a helical span at residues tryptophan 296–phenylalanine 316. Over glycine 317–alanine 323 the chain is Extracellular. A helical membrane pass occupies residues leucine 324–phenylalanine 344. Over proline 345–asparagine 360 the chain is Cytoplasmic. Residues leucine 361–phenylalanine 381 traverse the membrane as a helical segment. Residues serine 382 to threonine 383 are Extracellular-facing. Residues isoleucine 384–isoleucine 404 form a helical membrane-spanning segment. Residues arginine 405–serine 427 lie on the Cytoplasmic side of the membrane.

It belongs to the major facilitator superfamily. Sugar transporter (TC 2.A.1.1) family. CsbX subfamily.

It is found in the cell membrane. This Klebsiella pneumoniae protein is Ribitol transporter (rbtT).